Reading from the N-terminus, the 618-residue chain is Proline--tRNA ligase (618 aa).

This sequence belongs to the class-II aminoacyl-tRNA synthetase family. ProS type 1 subfamily. As to quaternary structure, homodimer.

The protein localises to the cytoplasm. The enzyme catalyses tRNA(Pro) + L-proline + ATP = L-prolyl-tRNA(Pro) + AMP + diphosphate. In terms of biological role, catalyzes the attachment of proline to tRNA(Pro) in a two-step reaction: proline is first activated by ATP to form Pro-AMP and then transferred to the acceptor end of tRNA(Pro). As ProRS can inadvertently accommodate and process non-cognate amino acids such as alanine and cysteine, to avoid such errors it has two additional distinct editing activities against alanine. One activity is designated as 'pretransfer' editing and involves the tRNA(Pro)-independent hydrolysis of activated Ala-AMP. The other activity is designated 'posttransfer' editing and involves deacylation of mischarged Ala-tRNA(Pro). The misacylated Cys-tRNA(Pro) is not edited by ProRS. This chain is Proline--tRNA ligase, found in Streptococcus uberis (strain ATCC BAA-854 / 0140J).